The chain runs to 491 residues: LETM1 domain-containing protein LETM2, mitochondrial (491 aa).

A mitochondrion-targeting transit peptide spans 1–25 (MAFYSYNSVLAIARTRFPSHFVHPT). Topologically, residues 26 to 177 (CSSYSPSCAF…LLRTCVDFFR (152 aa)) are mitochondrial intermembrane. Residues 94 to 109 (EQATKHPQVTSPQATK) are compositionally biased toward polar residues. The interval 94–115 (EQATKHPQVTSPQATKETGMEI) is disordered. The helical transmembrane segment at 178 to 198 (LVPFMVFLIVPFMEFLLPVFL) threads the bilayer. The Mitochondrial matrix segment spans residues 199–491 (KLFPEMLPST…QNSKASSKGA (293 aa)). Positions 208 to 235 (TFESESKKEEKQKKKMAVKLELAKFLQE) form a coiled coil. Positions 221–438 (KKMAVKLELA…LAPQLKGTKD (218 aa)) constitute a Letm1 RBD domain. The interval 435-491 (GTKDEDFIQPPPVTSSPITPSTPISLPKGPITSSEEPTLQAKSQMTAQNSKASSKGA) is disordered. Low complexity predominate over residues 449-461 (SSPITPSTPISLP). Over residues 465-491 (ITSSEEPTLQAKSQMTAQNSKASSKGA) the composition is skewed to polar residues.

Its subcellular location is the mitochondrion inner membrane. The sequence is that of LETM1 domain-containing protein LETM2, mitochondrial (LETM2) from Homo sapiens (Human).